The chain runs to 417 residues: COP9 signalosome complex subunit 7a (417 aa).

The region spanning 2-179 (EQTKALNALE…EMVQINSVAA (178 aa)) is the PCI domain. The disordered stretch occupies residues 240 to 417 (DEQKGAVPSS…KRGSKRKLTA (178 aa)). Gly residues predominate over residues 263-290 (RGGGGGGDGAGAGGSFRGSGYSRGGGLS). Low complexity-rich tracts occupy residues 291 to 311 (QGYR…SRQQ), 320 to 330 (SNQSGTNSLLT), and 343 to 352 (PSAVSPSAAA). Residues 367–379 (METGSGSGSGPLG) show a composition bias toward gly residues. Residues 385 to 405 (DMDDSEEDIDDDTMDLDDEGD) show a composition bias toward acidic residues.

This sequence belongs to the CSN7/EIF3M family. CSN7 subfamily. Component of the COP9 signalosome (CSN) complex.

The protein localises to the cytoplasm. It localises to the nucleus. In terms of biological role, component of the COP9 signalosome (CSN) complex that acts as an regulator of the ubiquitin (Ubl) conjugation pathway by mediating the deneddylation of the cullin subunit of SCF-type E3 ubiquitin-protein ligase complexes. The CSN complex is involved in the regulation of the circadian clock through its control of the stability of the SCF(FWD1) complex. The protein is COP9 signalosome complex subunit 7a (csn-7a) of Neurospora crassa (strain ATCC 24698 / 74-OR23-1A / CBS 708.71 / DSM 1257 / FGSC 987).